A 358-amino-acid polypeptide reads, in one-letter code: GTPase Obg (358 aa).

The Obg domain occupies 1-158 (MFVDNVDIYV…RHVRLELKLI (158 aa)). Positions 159 to 355 (ADVGLVGFPN…LKYLLHESVR (197 aa)) constitute an OBG-type G domain. GTP-binding positions include 165–172 (GFPNVGKS), 190–194 (FTTLI), 212–215 (DIPG), 280–283 (SKVD), and 336–338 (SSA). 2 residues coordinate Mg(2+): Ser-172 and Thr-192.

This sequence belongs to the TRAFAC class OBG-HflX-like GTPase superfamily. OBG GTPase family. As to quaternary structure, monomer. Mg(2+) is required as a cofactor.

The protein localises to the cytoplasm. Functionally, an essential GTPase which binds GTP, GDP and possibly (p)ppGpp with moderate affinity, with high nucleotide exchange rates and a fairly low GTP hydrolysis rate. Plays a role in control of the cell cycle, stress response, ribosome biogenesis and in those bacteria that undergo differentiation, in morphogenesis control. The chain is GTPase Obg from Wolinella succinogenes (strain ATCC 29543 / DSM 1740 / CCUG 13145 / JCM 31913 / LMG 7466 / NCTC 11488 / FDC 602W) (Vibrio succinogenes).